The following is a 703-amino-acid chain: MARKTPIERYRNIGISAHIDAGKTTTTERILFYTGVNHKIGEVHDGAATMDWMEQEQERGITITSAATTAFWKGMGGNYPEHRFNIIDTPGHVDFTIEVERSMRVLDGACMVYCAVGGVQPQSETVWRQANKYGVPRLAFVNKMDRTGANFFKVYDQLKTRLKANPVPVVVPIGAEDGFQGVVDLLEMKAIIWDEASQGVKFEYKDIPAELQATAEEWREKMVESAAEASEALMEKYLGGEELTRAEIVKALRDRTIACEIQPMLCGTAFKNKGVQRMLDAVIDFLPSPVDIPPVKGVDENDDEKKLERKADDNEKFSALAFKIMTDPFVGQLIFFRVYSGKINSGDTVYNPVKQKKERLGRILQMHANQREEIKEVLAGDIAAAVGLKDATTGDTLCDPTAPIVLERMVFPEPVISQAVEPKTKADQEKMGIALNRLAAEDPSFRVRTDEESGQTIISGMGELHLEILVDRMKREFGVEANIGAPQVAYRETIRKKAEDVEGKFVKQSGGRGQYGHAVITLEPQEPGKGFEFVDAIKGGVIPREYIPAVEKGIVDTLPSGILAGFPVVDVKVTLTFGSYHDVDSNENAFRMAGSMAFKDAMRKASPVLLEPMMAVEVETPEDYTGTVMGDLSSRRGIVQGMDDMVGGGKIIKAEVPLSEMFGYSTSLRSATQGRATYTMEFKHYSEAPKNIAEAVMAAKGTK.

In terms of domain architecture, tr-type G spans E8–V290. GTP-binding positions include A17–T24, D88–H92, and N142–D145.

Belongs to the TRAFAC class translation factor GTPase superfamily. Classic translation factor GTPase family. EF-G/EF-2 subfamily.

It localises to the cytoplasm. Functionally, catalyzes the GTP-dependent ribosomal translocation step during translation elongation. During this step, the ribosome changes from the pre-translocational (PRE) to the post-translocational (POST) state as the newly formed A-site-bound peptidyl-tRNA and P-site-bound deacylated tRNA move to the P and E sites, respectively. Catalyzes the coordinated movement of the two tRNA molecules, the mRNA and conformational changes in the ribosome. The protein is Elongation factor G 1 of Ralstonia nicotianae (strain ATCC BAA-1114 / GMI1000) (Ralstonia solanacearum).